A 475-amino-acid polypeptide reads, in one-letter code: Ribulose bisphosphate carboxylase large chain (475 aa).

A propeptide spanning residues 1–2 is cleaved from the precursor; the sequence is MS. P3 bears the N-acetylproline mark. K14 carries the post-translational modification N6,N6,N6-trimethyllysine. N123 and T173 together coordinate substrate. Catalysis depends on K175, which acts as the Proton acceptor. K177 contacts substrate. K201, D203, and E204 together coordinate Mg(2+). An N6-carboxylysine modification is found at K201. Catalysis depends on H294, which acts as the Proton acceptor. Residues R295, H327, and S379 each contribute to the substrate site.

This sequence belongs to the RuBisCO large chain family. Type I subfamily. Heterohexadecamer of 8 large chains and 8 small chains; disulfide-linked. The disulfide link is formed within the large subunit homodimers. Mg(2+) is required as a cofactor. In terms of processing, the disulfide bond which can form in the large chain dimeric partners within the hexadecamer appears to be associated with oxidative stress and protein turnover.

The protein localises to the plastid. It localises to the chloroplast. It catalyses the reaction 2 (2R)-3-phosphoglycerate + 2 H(+) = D-ribulose 1,5-bisphosphate + CO2 + H2O. The enzyme catalyses D-ribulose 1,5-bisphosphate + O2 = 2-phosphoglycolate + (2R)-3-phosphoglycerate + 2 H(+). In terms of biological role, ruBisCO catalyzes two reactions: the carboxylation of D-ribulose 1,5-bisphosphate, the primary event in carbon dioxide fixation, as well as the oxidative fragmentation of the pentose substrate in the photorespiration process. Both reactions occur simultaneously and in competition at the same active site. The polypeptide is Ribulose bisphosphate carboxylase large chain (Larix occidentalis (Western larch)).